The following is a 587-amino-acid chain: 5-aminolevulinate synthase, erythroid-specific, mitochondrial (587 aa).

The transit peptide at 1–49 directs the protein to the mitochondrion; it reads MVAAAMLLRSCPVLSKGPTGLLGKVAKTYQFLFGIGRCPILATQGPTCS. Arg-163 provides a ligand contact to succinyl-CoA. Residues Cys-258 and Phe-259 each coordinate pyridoxal 5'-phosphate. Positions 280 and 299 each coordinate succinyl-CoA. The pyridoxal 5'-phosphate site is built by Ser-332, His-360, and Thr-388. The active site involves Lys-391. At Lys-391 the chain carries N6-(pyridoxal phosphate)lysine. The pyridoxal 5'-phosphate site is built by Thr-420 and Thr-421. Residue Thr-508 participates in succinyl-CoA binding.

It belongs to the class-II pyridoxal-phosphate-dependent aminotransferase family. As to quaternary structure, homodimer. Interacts with SUCLA2. Requires pyridoxal 5'-phosphate as cofactor. In terms of tissue distribution, erythroid-specific.

It localises to the mitochondrion inner membrane. The enzyme catalyses succinyl-CoA + glycine + H(+) = 5-aminolevulinate + CO2 + CoA. Its pathway is porphyrin-containing compound metabolism; protoporphyrin-IX biosynthesis; 5-aminolevulinate from glycine: step 1/1. Its function is as follows. Catalyzes the pyridoxal 5'-phosphate (PLP)-dependent condensation of succinyl-CoA and glycine to form aminolevulinic acid (ALA), with CoA and CO2 as by-products. Contributes significantly to heme formation during erythropoiesis. This chain is 5-aminolevulinate synthase, erythroid-specific, mitochondrial (Alas2), found in Rattus norvegicus (Rat).